The following is a 1648-amino-acid chain: Pleiotropic ABC efflux transporter of multiple drugs YBT1 (1648 aa).

A helical membrane pass occupies residues 28-48; the sequence is NYVPTTLVTISILILLHNFFI. The N-linked (GlcNAc...) asparagine glycan is linked to Asn-72. Transmembrane regions (helical) follow at residues 140-160, 175-195, 207-227, and 250-270; these read VVIE…LSIE, PHVL…LNLN, NIWL…ILPF, and LNLV…LPVL. Asn-306 is a glycosylation site (N-linked (GlcNAc...) asparagine). A run of 2 helical transmembrane segments spans residues 352–372 and 392–412; these read FLNL…SIFV and MNLA…VAIC. The 314-residue stretch at 361–674 folds into the ABC transmembrane type-1 1 domain; sequence CFTTISAFSI…ISDMLSYLIQ (314 aa). Residue Asn-471 is glycosylated (N-linked (GlcNAc...) asparagine). Transmembrane regions (helical) follow at residues 501 to 521 and 523 to 543; these read ISEL…LTVS and ILLY…TIII. N-linked (GlcNAc...) asparagine glycosylation occurs at Asn-573. 2 helical membrane passes run 612–632 and 643–662; these read VWCV…GCTF and LTTP…RDPL. The ABC transporter 1 domain occupies 706–947; sequence LAFENVTLRW…GLLGEDENMK (242 aa). An N-linked (GlcNAc...) asparagine glycan is attached at Asn-710. Residue 741–748 participates in ATP binding; it reads GATGSGKT. 2 N-linked (GlcNAc...) asparagine glycosylation sites follow: Asn-784 and Asn-798. Residues 1012-1032 traverse the membrane as a helical segment; the sequence is MYGGWYTIVALASVFTAILCL. Residues 1032–1333 form the ABC transmembrane type-1 2 domain; that stretch reads LQITQAWWIR…LVRQYSELEM (302 aa). Asn-1042 carries N-linked (GlcNAc...) asparagine glycosylation. 3 helical membrane-spanning segments follow: residues 1089–1109, 1168–1188, and 1191–1211; these read IAKF…IGSI, IQSV…ISYI, and AFFP…FFYL. N-linked (GlcNAc...) asparagine glycosylation is present at Asn-1255. Transmembrane regions (helical) follow at residues 1282–1302 and 1305–1325; these read LIGA…INNI and GLAG…LWLV. One can recognise an ABC transporter 2 domain in the interval 1372–1622; it reads VEVNNLSLKY…KKSIFYNMCE (251 aa). Residue Asn-1376 is glycosylated (N-linked (GlcNAc...) asparagine). 1406-1413 is a binding site for ATP; that stretch reads GRTGAGKS. 3 N-linked (GlcNAc...) asparagine glycosylation sites follow: Asn-1503, Asn-1524, and Asn-1573.

This sequence belongs to the ABC transporter superfamily. ABCC family. Conjugate transporter (TC 3.A.1.208) subfamily.

The protein resides in the membrane. Functionally, pleiotropic ABC efflux transporter that might be involved in the resistance to azoles such as fluconazole. This Candida glabrata (strain ATCC 2001 / BCRC 20586 / JCM 3761 / NBRC 0622 / NRRL Y-65 / CBS 138) (Yeast) protein is Pleiotropic ABC efflux transporter of multiple drugs YBT1.